The chain runs to 78 residues: Large ribosomal subunit protein bL31 (78 aa).

This sequence belongs to the bacterial ribosomal protein bL31 family. Type A subfamily. As to quaternary structure, part of the 50S ribosomal subunit.

Functionally, binds the 23S rRNA. The sequence is that of Large ribosomal subunit protein bL31 (rpmE) from Rickettsia conorii (strain ATCC VR-613 / Malish 7).